The chain runs to 494 residues: Glycerol kinase (494 aa).

Thr13 lines the ADP pocket. Thr13, Thr14, and Ser15 together coordinate ATP. Thr13 provides a ligand contact to sn-glycerol 3-phosphate. Position 17 (Arg17) interacts with ADP. Residues Arg83, Glu84, Tyr135, and Asp244 each contribute to the sn-glycerol 3-phosphate site. Positions 83, 84, 135, 244, and 245 each coordinate glycerol. ADP contacts are provided by Thr266 and Gly309. ATP is bound by residues Thr266, Gly309, Gln313, and Gly410. ADP-binding residues include Gly410 and Asn414.

The protein belongs to the FGGY kinase family.

It catalyses the reaction glycerol + ATP = sn-glycerol 3-phosphate + ADP + H(+). Its pathway is polyol metabolism; glycerol degradation via glycerol kinase pathway; sn-glycerol 3-phosphate from glycerol: step 1/1. Its activity is regulated as follows. Inhibited by fructose 1,6-bisphosphate (FBP). Its function is as follows. Key enzyme in the regulation of glycerol uptake and metabolism. Catalyzes the phosphorylation of glycerol to yield sn-glycerol 3-phosphate. The protein is Glycerol kinase of Shewanella sp. (strain MR-4).